The chain runs to 459 residues: UDP-N-acetylmuramate--L-alanine ligase (459 aa).

118–124 (GTHGKTT) provides a ligand contact to ATP.

Belongs to the MurCDEF family.

It localises to the cytoplasm. The catalysed reaction is UDP-N-acetyl-alpha-D-muramate + L-alanine + ATP = UDP-N-acetyl-alpha-D-muramoyl-L-alanine + ADP + phosphate + H(+). The protein operates within cell wall biogenesis; peptidoglycan biosynthesis. Cell wall formation. This Agathobacter rectalis (strain ATCC 33656 / DSM 3377 / JCM 17463 / KCTC 5835 / VPI 0990) (Eubacterium rectale) protein is UDP-N-acetylmuramate--L-alanine ligase.